The following is a 275-amino-acid chain: Bis(5'-nucleosyl)-tetraphosphatase, symmetrical (275 aa).

It belongs to the Ap4A hydrolase family.

It carries out the reaction P(1),P(4)-bis(5'-adenosyl) tetraphosphate + H2O = 2 ADP + 2 H(+). In terms of biological role, hydrolyzes diadenosine 5',5'''-P1,P4-tetraphosphate to yield ADP. The sequence is that of Bis(5'-nucleosyl)-tetraphosphatase, symmetrical (apaH) from Aggregatibacter actinomycetemcomitans (Actinobacillus actinomycetemcomitans).